Here is a 166-residue protein sequence, read N- to C-terminus: NAD(P)H-quinone oxidoreductase subunit I, chloroplastic (166 aa).

4Fe-4S ferredoxin-type domains are found at residues 55 to 84 (GRIH…VDWK) and 95 to 124 (LNYS…MTEE). The [4Fe-4S] cluster site is built by Cys-64, Cys-67, Cys-70, Cys-74, Cys-104, Cys-107, Cys-110, and Cys-114.

This sequence belongs to the complex I 23 kDa subunit family. In terms of assembly, NDH is composed of at least 16 different subunits, 5 of which are encoded in the nucleus. Requires [4Fe-4S] cluster as cofactor.

It localises to the plastid. It is found in the chloroplast thylakoid membrane. The enzyme catalyses a plastoquinone + NADH + (n+1) H(+)(in) = a plastoquinol + NAD(+) + n H(+)(out). The catalysed reaction is a plastoquinone + NADPH + (n+1) H(+)(in) = a plastoquinol + NADP(+) + n H(+)(out). In terms of biological role, NDH shuttles electrons from NAD(P)H:plastoquinone, via FMN and iron-sulfur (Fe-S) centers, to quinones in the photosynthetic chain and possibly in a chloroplast respiratory chain. The immediate electron acceptor for the enzyme in this species is believed to be plastoquinone. Couples the redox reaction to proton translocation, and thus conserves the redox energy in a proton gradient. This Laphamia lindheimeri (Lindheimer's rockdaisy) protein is NAD(P)H-quinone oxidoreductase subunit I, chloroplastic.